Reading from the N-terminus, the 216-residue chain is Octanoyltransferase (216 aa).

A BPL/LPL catalytic domain is found at 30–216; sequence GEAGEAVWLL…KRQFFEVFGA (187 aa). Residues 69–76, 149–151, and 162–164 contribute to the substrate site; these read RGGQYTYH, AIG, and GLS. Catalysis depends on cysteine 180, which acts as the Acyl-thioester intermediate.

This sequence belongs to the LipB family.

The protein resides in the cytoplasm. The enzyme catalyses octanoyl-[ACP] + L-lysyl-[protein] = N(6)-octanoyl-L-lysyl-[protein] + holo-[ACP] + H(+). Its pathway is protein modification; protein lipoylation via endogenous pathway; protein N(6)-(lipoyl)lysine from octanoyl-[acyl-carrier-protein]: step 1/2. Its function is as follows. Catalyzes the transfer of endogenously produced octanoic acid from octanoyl-acyl-carrier-protein onto the lipoyl domains of lipoate-dependent enzymes. Lipoyl-ACP can also act as a substrate although octanoyl-ACP is likely to be the physiological substrate. This Jannaschia sp. (strain CCS1) protein is Octanoyltransferase.